The sequence spans 108 residues: Nucleoid-associated protein mma_2329 (108 aa).

Belongs to the YbaB/EbfC family. Homodimer.

The protein resides in the cytoplasm. Its subcellular location is the nucleoid. In terms of biological role, binds to DNA and alters its conformation. May be involved in regulation of gene expression, nucleoid organization and DNA protection. The chain is Nucleoid-associated protein mma_2329 from Janthinobacterium sp. (strain Marseille) (Minibacterium massiliensis).